A 311-amino-acid chain; its full sequence is Heme A synthase (311 aa).

The Cytoplasmic segment spans residues 1 to 6 (MQRFIK). The helical transmembrane segment at 7-27 (WLAVITSLDLLIVLLGGALVT) threads the bilayer. Residues 28–62 (KTGSGQGCGKSWPLCNGEFVPSNLSMETIIELSHR) lie on the Extracellular side of the membrane. Cys-35 and Cys-42 form a disulfide bridge. Glu-58 is a catalytic residue. His-61 serves as a coordination point for heme o. Residues 63 to 83 (LTSGSAGILVTLLCILSWKYY) traverse the membrane as a helical segment. At 84–91 (KHVRETKT) the chain is on the cytoplasmic side. Residues 92–112 (LAILSFVFLVAQALMGAAAVV) form a helical membrane-spanning segment. Residues 113 to 121 (WGQMPAVLA) are Extracellular-facing. The chain crosses the membrane as a helical span at residues 122 to 142 (IHFGISLISFASVILLTCLIF). His-123 is a heme o binding site. The Cytoplasmic segment spans residues 143–159 (EIDQKFDARSLIMDKKM). A helical transmembrane segment spans residues 160–180 (KFHIYGVTIYSYIVVYTGALV). Residues 181-211 (RHERASLACPDFPLCSKNRPMPTQLHEWVQM) lie on the Extracellular side of the membrane. Cys-189 and Cys-195 are oxidised to a cystine. Residues 212–232 (GHRVAAMLIFAWILYAMILAI) traverse the membrane as a helical segment. Heme b is bound at residue His-213. At 233–243 (RHYKQQPVVYW) the chain is on the cytoplasmic side. Residues 244 to 264 (GWIISFILVTLQAVVGVLVVF) form a helical membrane-spanning segment. Residues 265–271 (TNASLAM) lie on the Extracellular side of the membrane. Residues 272-292 (ALLHSLFISCLFAVLCYLVML) form a helical membrane-spanning segment. A heme b-binding site is contributed by His-275. Topologically, residues 293-311 (GTRIKVNAKEAGSTSKQTK) are cytoplasmic.

The protein belongs to the COX15/CtaA family. Type 1 subfamily. As to quaternary structure, interacts with CtaB. Heme b is required as a cofactor.

Its subcellular location is the cell membrane. It carries out the reaction Fe(II)-heme o + 2 A + H2O = Fe(II)-heme a + 2 AH2. It functions in the pathway porphyrin-containing compound metabolism; heme A biosynthesis; heme A from heme O: step 1/1. In terms of biological role, catalyzes the conversion of heme O to heme A by two successive hydroxylations of the methyl group at C8. The first hydroxylation forms heme I, the second hydroxylation results in an unstable dihydroxymethyl group, which spontaneously dehydrates, resulting in the formyl group of heme A. This is Heme A synthase from Bacillus cereus (strain G9842).